The sequence spans 273 residues: DNA repair protein RecO (273 aa).

Positions 250–273 are disordered; it reads NVGQNPSGKDDLNERRDVDGTGES. Basic and acidic residues predominate over residues 257-273; that stretch reads GKDDLNERRDVDGTGES.

Belongs to the RecO family.

In terms of biological role, involved in DNA repair and RecF pathway recombination. This Desulfitobacterium hafniense (strain Y51) protein is DNA repair protein RecO.